A 766-amino-acid polypeptide reads, in one-letter code: Exocyst complex component 6 (766 aa).

Residues 28-90 adopt a coiled-coil conformation; the sequence is NTKQIGDQLE…SLDTSLRQIS (63 aa).

It belongs to the SEC15 family. In terms of assembly, the exocyst complex is composed of Sec3/Exoc1, Sec5/Exoc2, Sec6/Exoc3, Sec8/Exoc4, Sec10/Exoc5, Sec15/Exoc6, Exo70/Exoc7 and Exo84/Exoc8. Interacts with RAB3, RAB8, RAB11 and RAB27. As to expression, detected in developing rhabdomeres in photoreceptor cells.

The protein resides in the cell projection. It localises to the rhabdomere. In terms of biological role, component of the exocyst complex involved in the docking of exocytic vesicles with fusion sites on the plasma membrane. The polypeptide is Exocyst complex component 6 (Drosophila melanogaster (Fruit fly)).